The following is a 112-amino-acid chain: Nitrogen regulatory protein P-II (112 aa).

Tyr51 carries the O-UMP-tyrosine modification.

The protein belongs to the P(II) protein family. As to quaternary structure, homotrimer.

Its function is as follows. In nitrogen-limiting conditions, when the ratio of Gln to 2-ketoglutarate decreases, P-II is uridylylated to P-II-UMP. P-II-UMP allows the deadenylation of glutamine synthetase (GS), thus activating the enzyme. Conversely, in nitrogen excess P-II is deuridylated and promotes the adenylation of GS. P-II indirectly controls the transcription of the GS gene (glnA). P-II prevents NR-II-catalyzed conversion of NR-I to NR-I-phosphate, the transcriptional activator of glnA. When P-II is uridylylated to P-II-UMP, these events are reversed. This is Nitrogen regulatory protein P-II (glnB) from Mycobacterium bovis (strain ATCC BAA-935 / AF2122/97).